The following is a 355-amino-acid chain: MLDVKNTGVFSSAFIDRLNAMTNSDDGDETADAELDSGLANSKYIDSSDEMASALSSFINRRDLEKLKGTNSDSQERILDGEEDEINHKIFDLKRTLKDNLPLDRDFIDRLKRYFKDPSDQVLALRELLNEKDLTAEQVELLTKIINEIISGSEKSVNAGINSAIQAKLFGNKMKLEPQLLRACYRGFIMGNISTTDQYIEWLGNFGFNHRHTIVNFVEQSLIVDMDSEKPSCNAYEFGFVLSKLIAIKMIRTSDVIFMKKLESSSLLKDGSLSAEQLLLTLLYIFQYPSESEQILTSVIEVSRASHEDSVVYQTYLSSVNESPHDIFKSESEREIAINILRELVTSAYKKELSR.

It localises to the secreted. The protein resides in the host cell. Its function is as follows. Necessary for the secretion of IPA invasins. The chain is Protein MxiC (mxiC) from Shigella flexneri.